The chain runs to 207 residues: Large ribosomal subunit protein uL4 (207 aa).

Positions 44–78 are disordered; it reads MRQGTHKTKNRAEVSGGGRKPWRQKGTGRARQGSI.

The protein belongs to the universal ribosomal protein uL4 family. In terms of assembly, part of the 50S ribosomal subunit.

Its function is as follows. One of the primary rRNA binding proteins, this protein initially binds near the 5'-end of the 23S rRNA. It is important during the early stages of 50S assembly. It makes multiple contacts with different domains of the 23S rRNA in the assembled 50S subunit and ribosome. In terms of biological role, forms part of the polypeptide exit tunnel. This Geobacillus kaustophilus (strain HTA426) protein is Large ribosomal subunit protein uL4.